The primary structure comprises 90 residues: MTSRLSDPNSSARSDMSVPLYPTASPVSVEAYYSESEDEAANDFLVRMGRQQSVLRRRRRRTRCVGMVIACLLVAVLSGGFGALLMWLLR.

The Intravirion portion of the chain corresponds to 1–67; sequence MTSRLSDPNS…RRRRTRCVGM (67 aa). Positions 21-24 match the Internalization motif motif; the sequence is YPTA. The segment at 30–39 is acidic; sequence EAYYSESEDE. Phosphoserine; by host CK2 is present on residues serine 34 and serine 36. Residues 68–88 form a helical; Signal-anchor for type II membrane protein membrane-spanning segment; sequence VIACLLVAVLSGGFGALLMWL. The Virion surface segment spans residues 89 to 90; the sequence is LR.

It belongs to the alphaherpesvirinae envelope protein US9 family. Phosphorylated on serines within the acidic cluster, possibly by host CK2. Phosphorylation determines whether endocytosed viral US9 traffics to the trans-Golgi network or recycles to the cell membrane.

Its subcellular location is the virion membrane. The protein resides in the host Golgi apparatus membrane. It is found in the host smooth endoplasmic reticulum membrane. The protein localises to the host cell membrane. In terms of biological role, essential for the anterograde spread of the infection throughout the host nervous system. Together with the gE/gI heterodimer, US9 is involved in the sorting and transport of viral structural components toward axon tips. The polypeptide is Envelope protein US9 (Homo sapiens (Human)).